Consider the following 1023-residue polypeptide: 2-oxoglutarate dehydrogenase complex component E1 (1023 aa).

Residues 1-40 constitute a mitochondrion transit peptide; sequence MFHLRTCAAKLRPLTASQTVKTFSQNRPAAARTFQQIRCY. At Lys74 the chain carries N6-succinyllysine. At Ser100 the chain carries Phosphoserine. 3 residues coordinate Ca(2+): His143, Asp156, and Asp158. Position 312 (Arg312) interacts with thiamine diphosphate. Lys401 bears the N6-acetyllysine mark. Thiamine diphosphate contacts are provided by Asp411, Asn444, and Ile446. Residues Asp411, Asn444, and Ile446 each contribute to the Mg(2+) site. A Glycyl lysine isopeptide (Lys-Gly) (interchain with G-Cter in ubiquitin) cross-link involves residue Lys534. An N6-succinyllysine modification is found at Lys564. Gln676 contributes to the thiamine diphosphate binding site. Lys970 bears the N6-acetyllysine mark.

It belongs to the alpha-ketoglutarate dehydrogenase family. Homodimer. The 2-oxoglutarate dehydrogenase complex is composed of OGDH (2-oxoglutarate dehydrogenase; E1), DLST (dihydrolipoamide succinyltransferase; E2), DLD (dihydrolipoamide dehydrogenase; E3) and the assembly factor KGD4. It contains multiple copies of the three enzymatic components (E1, E2 and E3). In the nucleus, the 2-oxoglutarate dehydrogenase complex associates with KAT2A. Interacts with ABHD11; this interaction maintains the functional lipoylation of the 2-oxoglutarate dehydrogenase complex. The cofactor is thiamine diphosphate. Mg(2+) serves as cofactor.

It is found in the mitochondrion. The protein localises to the nucleus. It carries out the reaction N(6)-[(R)-lipoyl]-L-lysyl-[protein] + 2-oxoglutarate + H(+) = N(6)-[(R)-S(8)-succinyldihydrolipoyl]-L-lysyl-[protein] + CO2. Calcium ions and ADP stimulate, whereas ATP and NADH reduce catalytic activity. Its function is as follows. 2-oxoglutarate dehydrogenase (E1o) component of the 2-oxoglutarate dehydrogenase complex (OGDHC). Participates in the first step, rate limiting for the overall conversion of 2-oxoglutarate to succinyl-CoA and CO(2) catalyzed by the whole OGDHC. Catalyzes the irreversible decarboxylation of 2-oxoglutarate (alpha-ketoglutarate) via the thiamine diphosphate (ThDP) cofactor and subsequent transfer of the decarboxylated acyl intermediate on an oxidized dihydrolipoyl group that is covalently amidated to the E2 enzyme (dihydrolipoyllysine-residue succinyltransferase or DLST). Plays a key role in the Krebs (citric acid) cycle, which is a common pathway for oxidation of fuel molecules, including carbohydrates, fatty acids, and amino acids. Can catalyze the decarboxylation of 2-oxoadipate in vitro, but at a much lower rate than 2-oxoglutarate. Mainly active in the mitochondrion. A fraction of the 2-oxoglutarate dehydrogenase complex also localizes in the nucleus and is required for lysine succinylation of histones: associates with KAT2A on chromatin and provides succinyl-CoA to histone succinyltransferase KAT2A. The chain is 2-oxoglutarate dehydrogenase complex component E1 from Pongo abelii (Sumatran orangutan).